The primary structure comprises 304 residues: NADH-cytochrome b5 reductase 2 (304 aa).

Residues 6-26 (GTPVVVAVAAVAATVLLLLLL) form a helical membrane-spanning segment. One can recognise an FAD-binding FR-type domain in the interval 43 to 155 (QAKYPLPLVG…RGPNGLLVYK (113 aa)). FAD is bound by residues 135 to 165 (DSMK…IKPD) and 174 to 209 (FAKH…KCYL).

It belongs to the flavoprotein pyridine nucleotide cytochrome reductase family. FAD is required as a cofactor.

It is found in the membrane. It carries out the reaction 2 Fe(III)-[cytochrome b5] + NADH = 2 Fe(II)-[cytochrome b5] + NAD(+) + H(+). Functionally, NADH-cytochrome b5 reductases are involved in desaturation and elongation of fatty acids, cholesterol biosynthesis and drug metabolism. The sequence is that of NADH-cytochrome b5 reductase 2 (CYB5R2) from Gallus gallus (Chicken).